Consider the following 210-residue polypeptide: Large ribosomal subunit protein uL3 (210 aa).

Residues 134 to 153 are disordered; that stretch reads THGNSLSHRAPGSIGQNQTP. An N5-methylglutamine modification is found at Gln151.

The protein belongs to the universal ribosomal protein uL3 family. In terms of assembly, part of the 50S ribosomal subunit. Forms a cluster with proteins L14 and L19. Methylated by PrmB.

Its function is as follows. One of the primary rRNA binding proteins, it binds directly near the 3'-end of the 23S rRNA, where it nucleates assembly of the 50S subunit. This chain is Large ribosomal subunit protein uL3, found in Aeromonas salmonicida (strain A449).